The following is a 219-amino-acid chain: 7-cyano-7-deazaguanine synthase (219 aa).

10-20 (FSGGQDSTTCL) contributes to the ATP binding site. Zn(2+) contacts are provided by cysteine 188, cysteine 196, cysteine 199, and cysteine 202.

It belongs to the QueC family. Zn(2+) serves as cofactor.

It carries out the reaction 7-carboxy-7-deazaguanine + NH4(+) + ATP = 7-cyano-7-deazaguanine + ADP + phosphate + H2O + H(+). It functions in the pathway purine metabolism; 7-cyano-7-deazaguanine biosynthesis. Functionally, catalyzes the ATP-dependent conversion of 7-carboxy-7-deazaguanine (CDG) to 7-cyano-7-deazaguanine (preQ(0)). The sequence is that of 7-cyano-7-deazaguanine synthase from Neisseria meningitidis serogroup B (strain ATCC BAA-335 / MC58).